Here is a 569-residue protein sequence, read N- to C-terminus: CTP synthase (569 aa).

Residues 1–276 (MNQATPTKHV…DAYLVRRLDL (276 aa)) are amidoligase domain. Residue Ser-18 coordinates CTP. Ser-18 serves as a coordination point for UTP. ATP contacts are provided by residues 19-24 (SLGKGL) and Asp-76. Asp-76 and Glu-150 together coordinate Mg(2+). CTP-binding positions include 157–159 (DIE), 197–202 (KTKPTQ), and Lys-233. UTP contacts are provided by residues 197–202 (KTKPTQ) and Lys-233. Positions 301–550 (TVALVGKYVD…VGAAIERQRE (250 aa)) constitute a Glutamine amidotransferase type-1 domain. An L-glutamine-binding site is contributed by Gly-364. Cys-391 functions as the Nucleophile; for glutamine hydrolysis in the catalytic mechanism. L-glutamine-binding positions include 392 to 395 (LGLQ), Glu-415, and Arg-476. Catalysis depends on residues His-523 and Glu-525.

This sequence belongs to the CTP synthase family. As to quaternary structure, homotetramer.

The enzyme catalyses UTP + L-glutamine + ATP + H2O = CTP + L-glutamate + ADP + phosphate + 2 H(+). It catalyses the reaction L-glutamine + H2O = L-glutamate + NH4(+). The catalysed reaction is UTP + NH4(+) + ATP = CTP + ADP + phosphate + 2 H(+). It participates in pyrimidine metabolism; CTP biosynthesis via de novo pathway; CTP from UDP: step 2/2. Its activity is regulated as follows. Allosterically activated by GTP, when glutamine is the substrate; GTP has no effect on the reaction when ammonia is the substrate. The allosteric effector GTP functions by stabilizing the protein conformation that binds the tetrahedral intermediate(s) formed during glutamine hydrolysis. Inhibited by the product CTP, via allosteric rather than competitive inhibition. Functionally, catalyzes the ATP-dependent amination of UTP to CTP with either L-glutamine or ammonia as the source of nitrogen. Regulates intracellular CTP levels through interactions with the four ribonucleotide triphosphates. This Nocardioides sp. (strain ATCC BAA-499 / JS614) protein is CTP synthase.